The sequence spans 261 residues: Phosphatidylglycerol--prolipoprotein diacylglyceryl transferase (261 aa).

The next 3 membrane-spanning stretches (helical) occupy residues 20–40, 54–74, and 88–108; these read LAIH…VWLA, IIDF…LYYV, and IIAI…GAIV. A 1,2-diacyl-sn-glycero-3-phospho-(1'-sn-glycerol) is bound at residue arginine 139. Helical transmembrane passes span 175–195 and 235–255; these read MPTF…VMVF and ARVS…LFVY.

It belongs to the Lgt family.

It localises to the cell membrane. The enzyme catalyses L-cysteinyl-[prolipoprotein] + a 1,2-diacyl-sn-glycero-3-phospho-(1'-sn-glycerol) = an S-1,2-diacyl-sn-glyceryl-L-cysteinyl-[prolipoprotein] + sn-glycerol 1-phosphate + H(+). The protein operates within protein modification; lipoprotein biosynthesis (diacylglyceryl transfer). In terms of biological role, catalyzes the transfer of the diacylglyceryl group from phosphatidylglycerol to the sulfhydryl group of the N-terminal cysteine of a prolipoprotein, the first step in the formation of mature lipoproteins. The sequence is that of Phosphatidylglycerol--prolipoprotein diacylglyceryl transferase from Lactococcus lactis subsp. cremoris (strain MG1363).